A 129-amino-acid chain; its full sequence is UPF0325 protein PC1_0937 (129 aa).

This sequence belongs to the UPF0325 family.

The protein is UPF0325 protein PC1_0937 of Pectobacterium carotovorum subsp. carotovorum (strain PC1).